We begin with the raw amino-acid sequence, 156 residues long: Cyanate hydratase (156 aa).

Catalysis depends on residues Arg96, Glu99, and Ser122.

It belongs to the cyanase family.

It catalyses the reaction cyanate + hydrogencarbonate + 3 H(+) = NH4(+) + 2 CO2. Its function is as follows. Catalyzes the reaction of cyanate with bicarbonate to produce ammonia and carbon dioxide. The polypeptide is Cyanate hydratase (Burkholderia mallei (strain NCTC 10247)).